The sequence spans 90 residues: Small ribosomal subunit protein bS16 (90 aa).

It belongs to the bacterial ribosomal protein bS16 family.

In Lactobacillus helveticus (strain DPC 4571), this protein is Small ribosomal subunit protein bS16.